The sequence spans 1064 residues: WD repeat-containing protein on Y chromosome (1064 aa).

8 WD repeats span residues 153 to 197, 326 to 365, 369 to 408, 459 to 498, 511 to 550, 598 to 638, 746 to 785, and 827 to 866; these read EEVT…IRTA, RVPLGVSTFFVAESHNIVVTGGPDTFVRIWDVYIPTEPSA, GHNGGIVMVFVQPEENKVYSVDYQKIIKVWDLQEHTLLQT, THAAPVSVVLYNRLFRNIVTCGLDSYIIVWDPWSGRRKII, IIDIEITAATFDPLEQFLLTGARDGTLKIWNYNNAVVVRN, FHTD…RRYS, KTGDCVLTMCTDRKNRYIYTGTAFGYIKVWHIVNYPEAEK, and AHLKAINSIAFINLPKIVFRGSHDYSCRLWTQGGRYLGTL. Basic and acidic residues predominate over residues 914–924; the sequence is PAKRAEVKAPE. 2 disordered regions span residues 914 to 935 and 1023 to 1064; these read PAKRAEVKAPEDRDEETAQTDD and GSAL…QQSE. A compositionally biased stretch (acidic residues) spans 925 to 935; sequence DRDEETAQTDD.

This chain is WD repeat-containing protein on Y chromosome, found in Drosophila pseudoobscura pseudoobscura (Fruit fly).